We begin with the raw amino-acid sequence, 145 residues long: Protein AggB (145 aa).

The first 24 residues, 1-24 (MLKKSILPMSCGVLVMVMSGLLDA), serve as a signal peptide directing secretion.

This sequence to E.coli AfaD.

In Escherichia coli, this protein is Protein AggB (aggB).